The sequence spans 249 residues: Histone H1 (249 aa).

2 stretches are compositionally biased toward low complexity: residues 1–19 and 27–43; these read MSDS…QTAS and KKPA…TTAP. Disordered stretches follow at residues 1-53 and 105-249; these read MSDS…QQMV and QTKG…ATKK. Residues 45–119 enclose the H15 domain; that stretch reads THPPTQQMVD…GASGSFKLSA (75 aa). The segment covering 121–134 has biased composition (basic and acidic residues); the sequence is SKKEPKPKVSSVEK. Residues 146–158 are compositionally biased toward basic residues; that stretch reads AKKKTISATKKPK. The segment covering 173-190 has biased composition (basic and acidic residues); sequence KSVDKKKAEKAKAKDAKK. A compositionally biased stretch (low complexity) spans 195-233; it reads KAKPTTAKAKSSAAKPKTPKPKTTSAKPKKVVAAASPKK. The span at 234 to 249 shows a compositional bias: basic residues; sequence AAAKKPKAKTASATKK.

This sequence belongs to the histone H1/H5 family.

The protein resides in the nucleus. Its subcellular location is the chromosome. Its function is as follows. Histones H1 are necessary for the condensation of nucleosome chains into higher-order structures. This is Histone H1 (His1) from Drosophila hydei (Fruit fly).